Reading from the N-terminus, the 81-residue chain is Photosystem I iron-sulfur center (81 aa).

4Fe-4S ferredoxin-type domains follow at residues 2 to 31 (SHTV…MVPW) and 39 to 68 (IASA…VRVY). C11, C14, C17, C21, C48, C51, C54, and C58 together coordinate [4Fe-4S] cluster.

The eukaryotic PSI reaction center is composed of at least 11 subunits. [4Fe-4S] cluster is required as a cofactor.

The protein resides in the plastid. It localises to the chloroplast thylakoid membrane. The catalysed reaction is reduced [plastocyanin] + hnu + oxidized [2Fe-2S]-[ferredoxin] = oxidized [plastocyanin] + reduced [2Fe-2S]-[ferredoxin]. Apoprotein for the two 4Fe-4S centers FA and FB of photosystem I (PSI); essential for photochemical activity. FB is the terminal electron acceptor of PSI, donating electrons to ferredoxin. The C-terminus interacts with PsaA/B/D and helps assemble the protein into the PSI complex. Required for binding of PsaD and PsaE to PSI. PSI is a plastocyanin/cytochrome c6-ferredoxin oxidoreductase, converting photonic excitation into a charge separation, which transfers an electron from the donor P700 chlorophyll pair to the spectroscopically characterized acceptors A0, A1, FX, FA and FB in turn. The chain is Photosystem I iron-sulfur center from Chlorella vulgaris (Green alga).